Reading from the N-terminus, the 168-residue chain is MCMCVVLVYFSILLDKGTKVLYTHDNNWLVILVFYFLAFGSIMRISGRTCSEEMKKSFGQASYHNGLQNFSKESPVGVNLEKKKTHISCCIILATQRFLQKFSNKRLGNPHLHPTRESTFSRELATENNSGNFPVLLRYHIFRQLDIENGILLCQVLQALIIVQVMFS.

The next 2 helical transmembrane spans lie at 27–47 (NWLV…RISG) and 147–167 (IENG…QVMF).

It localises to the membrane. This is an uncharacterized protein from Saccharomyces cerevisiae (strain ATCC 204508 / S288c) (Baker's yeast).